The chain runs to 265 residues: uncharacterized protein (265 aa).

Disordered stretches follow at residues 21 to 53 (TLTH…LGPH) and 78 to 133 (HAPS…SSVS). Residues 90–101 (DDDDDDEDDDDS) show a composition bias toward acidic residues. Over residues 114-123 (SSSSSSSPRV) the composition is skewed to low complexity. 137 to 144 (AILHQGKS) lines the ATP pocket.

This is an uncharacterized protein from Saccharomyces cerevisiae (strain ATCC 204508 / S288c) (Baker's yeast).